The sequence spans 102 residues: Small ribosomal subunit protein uS10 (102 aa).

Belongs to the universal ribosomal protein uS10 family. In terms of assembly, part of the 30S ribosomal subunit.

Its function is as follows. Involved in the binding of tRNA to the ribosomes. In Rhizobium etli (strain CIAT 652), this protein is Small ribosomal subunit protein uS10.